Here is an 862-residue protein sequence, read N- to C-terminus: Pentatricopeptide repeat-containing protein At1g74850, chloroplastic (862 aa).

The transit peptide at 1–66 (MNLAIPNPNS…DLVLGNPSVS (66 aa)) directs the protein to the chloroplast. PPR repeat units follow at residues 104-139 (SLND…WCKP), 140-174 (NEHI…GVSR), 175-209 (SVFS…KISP), 210-245 (SILT…GIQP), 246-280 (DIVT…GIVP), 281-315 (DLTT…GSLP), 316-350 (DITS…GCTP), 351-385 (NANT…NTDP), 386-420 (DAAT…NIEP), 421-455 (DMET…DIVP), 456-490 (SSKA…GSNP), 491-525 (SIET…GIPR), 526-560 (NRDT…RCDP), 561-595 (DERT…DILP), and 596-630 (SIMC…RVSN). A Smr domain is found at 713 to 801 (VDVHRMSEGG…RIMCQRSQLK (89 aa)). Residues 831–862 (GTRASTSSDTNHSGNPTQRRTRTKKELAGSTA) form a disordered region. Residues 833 to 848 (RASTSSDTNHSGNPTQ) show a composition bias toward polar residues.

The protein belongs to the PPR family. P subfamily. In terms of tissue distribution, mostly expressed in leaves, stems and flowers, but barely in roots.

It localises to the plastid. Its subcellular location is the chloroplast. Involved in plastid gene expression. The sequence is that of Pentatricopeptide repeat-containing protein At1g74850, chloroplastic (PTAC2) from Arabidopsis thaliana (Mouse-ear cress).